The following is a 151-amino-acid chain: D-aminoacyl-tRNA deacylase (151 aa).

Positions 138-139 (GP) match the Gly-cisPro motif, important for rejection of L-amino acids motif.

This sequence belongs to the DTD family. As to quaternary structure, homodimer.

The protein resides in the cytoplasm. The catalysed reaction is glycyl-tRNA(Ala) + H2O = tRNA(Ala) + glycine + H(+). It catalyses the reaction a D-aminoacyl-tRNA + H2O = a tRNA + a D-alpha-amino acid + H(+). Its function is as follows. An aminoacyl-tRNA editing enzyme that deacylates mischarged D-aminoacyl-tRNAs. Also deacylates mischarged glycyl-tRNA(Ala), protecting cells against glycine mischarging by AlaRS. Acts via tRNA-based rather than protein-based catalysis; rejects L-amino acids rather than detecting D-amino acids in the active site. By recycling D-aminoacyl-tRNA to D-amino acids and free tRNA molecules, this enzyme counteracts the toxicity associated with the formation of D-aminoacyl-tRNA entities in vivo and helps enforce protein L-homochirality. This chain is D-aminoacyl-tRNA deacylase, found in Magnetococcus marinus (strain ATCC BAA-1437 / JCM 17883 / MC-1).